Reading from the N-terminus, the 160-residue chain is Transcriptional repressor NrdR (160 aa).

The segment at 3–34 is a zinc-finger region; it reads CPFCGAEDTSVVDSRVSEEGSRIRRRRQCTAC. Residues 49 to 139 enclose the ATP-cone domain; the sequence is PQIIKQGGNR…VYRSFEDVGD (91 aa).

This sequence belongs to the NrdR family. Requires Zn(2+) as cofactor.

In terms of biological role, negatively regulates transcription of bacterial ribonucleotide reductase nrd genes and operons by binding to NrdR-boxes. This Nitrosomonas eutropha (strain DSM 101675 / C91 / Nm57) protein is Transcriptional repressor NrdR.